Reading from the N-terminus, the 630-residue chain is 1-deoxy-D-xylulose-5-phosphate synthase (630 aa).

Residues histidine 75 and 116 to 118 (GHS) each bind thiamine diphosphate. Aspartate 147 lines the Mg(2+) pocket. Residues 148–149 (GA), asparagine 176, tyrosine 287, and glutamate 367 contribute to the thiamine diphosphate site. Asparagine 176 contributes to the Mg(2+) binding site.

It belongs to the transketolase family. DXPS subfamily. Homodimer. Requires Mg(2+) as cofactor. It depends on thiamine diphosphate as a cofactor.

It catalyses the reaction D-glyceraldehyde 3-phosphate + pyruvate + H(+) = 1-deoxy-D-xylulose 5-phosphate + CO2. The protein operates within metabolic intermediate biosynthesis; 1-deoxy-D-xylulose 5-phosphate biosynthesis; 1-deoxy-D-xylulose 5-phosphate from D-glyceraldehyde 3-phosphate and pyruvate: step 1/1. Functionally, catalyzes the acyloin condensation reaction between C atoms 2 and 3 of pyruvate and glyceraldehyde 3-phosphate to yield 1-deoxy-D-xylulose-5-phosphate (DXP). The protein is 1-deoxy-D-xylulose-5-phosphate synthase of Treponema pallidum (strain Nichols).